Consider the following 149-residue polypeptide: Large ribosomal subunit protein uL24 (149 aa).

Belongs to the universal ribosomal protein uL24 family. As to quaternary structure, part of the 50S ribosomal subunit.

In terms of biological role, one of two assembly initiator proteins, it binds directly to the 5'-end of the 23S rRNA, where it nucleates assembly of the 50S subunit. Located at the polypeptide exit tunnel on the outside of the subunit. In Hyperthermus butylicus (strain DSM 5456 / JCM 9403 / PLM1-5), this protein is Large ribosomal subunit protein uL24.